The following is a 786-amino-acid chain: Neprilysin-3 (786 aa).

The Cytoplasmic portion of the chain corresponds to 1 to 52 (MTRYKQTEFTEDDSSSIGGIQLNEATGHTGMQIRYHTARATWNWRSRNKTEK). The helical; Signal-anchor for type II membrane protein transmembrane segment at 53–73 (WLLITTFVMAITIFTLLIVLF) threads the bilayer. Residues 74–786 (TDGGSSDATK…MNPTEKCEVW (713 aa)) lie on the Extracellular side of the membrane. Positions 102-786 (PCLNKHCIFA…MNPTEKCEVW (685 aa)) constitute a Peptidase M13 domain. Intrachain disulfides connect cysteine 103–cysteine 108, cysteine 126–cysteine 771, cysteine 134–cysteine 731, cysteine 190–cysteine 450, and cysteine 659–cysteine 783. 10 N-linked (GlcNAc...) asparagine glycosylation sites follow: asparagine 216, asparagine 226, asparagine 256, asparagine 279, asparagine 305, asparagine 325, asparagine 356, asparagine 388, asparagine 496, and asparagine 569. Zn(2+) is bound at residue histidine 622. Glutamate 623 is a catalytic residue. Zn(2+) is bound by residues histidine 626 and glutamate 682. Residue aspartate 686 is the Proton donor of the active site. Residue asparagine 715 is glycosylated (N-linked (GlcNAc...) asparagine).

The protein belongs to the peptidase M13 family. Requires Zn(2+) as cofactor.

The protein resides in the cell membrane. It catalyses the reaction Preferential cleavage of polypeptides between hydrophobic residues, particularly with Phe or Tyr at P1'.. Functionally, metalloendoprotease which is required in the dorsal paired medial neurons for the proper formation of long-term (LTM) and middle-term memories (MTM). Also required in the mushroom body neurons where it functions redundantly with neprilysins Nep2 and Nep4 in normal LTM formation. The polypeptide is Neprilysin-3 (Drosophila melanogaster (Fruit fly)).